Reading from the N-terminus, the 620-residue chain is Translocator protein BipB (620 aa).

The tract at residues 58–95 is disordered; the sequence is QCDAQPAAHDARLDDRPALRAPQERDAPPLGASDTGSR. Positions 66–84 are enriched in basic and acidic residues; sequence HDARLDDRPALRAPQERDA. Positions 309–339 form a coiled coil; sequence EMQAKREAELQKKSDEYQAQVKKAEEMQKTM. A run of 3 helical transmembrane segments spans residues 355 to 375, 401 to 421, and 430 to 450; these read FAAAAFTGGASLALAAVGLAL, AILKPLMEMISSLITKALVAC, and LAGAILGAVVTGVALVAAAFV.

It belongs to the SctE/SipB/YopB family.

Its subcellular location is the secreted. The protein resides in the host membrane. Plays a role in the bacterium-induced formation of multinucleated giant cell (MNGC), which is formed after host cell fusion, as well as in the intercellular spreading of bacteria and in the induction of apoptosis in macrophages. May act in concert with other effector proteins to induce fusion of host cell membranes. The sequence is that of Translocator protein BipB (bipB) from Burkholderia mallei (strain NCTC 10247).